A 378-amino-acid chain; its full sequence is Ribosomal RNA large subunit methyltransferase G (378 aa).

It belongs to the methyltransferase superfamily. RlmG family.

It is found in the cytoplasm. The enzyme catalyses guanosine(1835) in 23S rRNA + S-adenosyl-L-methionine = N(2)-methylguanosine(1835) in 23S rRNA + S-adenosyl-L-homocysteine + H(+). Functionally, specifically methylates the guanine in position 1835 (m2G1835) of 23S rRNA. This is Ribosomal RNA large subunit methyltransferase G from Shigella dysenteriae serotype 1 (strain Sd197).